The following is a 428-amino-acid chain: PGL/p-HBAD biosynthesis glycosyltransferase MRA_2985 (428 aa).

The disordered stretch occupies residues 1 to 23 (MEETSVAGDPGPDAGTSTAPNAA).

It belongs to the UDP-glycosyltransferase family.

In terms of biological role, involved in glycosylation steps downstream of mono-O-methyl-glycosyl-p-hydroxybenzoic acid derivative (p-HBAD I) and 2-O-methyl-rhamnosyl-phenolphthiocerol dimycocerosate (mycoside B) during the p-hydroxybenzoic acid derivatives (p-HBAD) and glycosylated phenolphthiocerol dimycocerosates (PGL) biosynthesis. This Mycobacterium tuberculosis (strain ATCC 25177 / H37Ra) protein is PGL/p-HBAD biosynthesis glycosyltransferase MRA_2985.